The primary structure comprises 343 residues: Protein RecA (343 aa).

Residue 64–71 (GPESSGKT) coordinates ATP.

This sequence belongs to the RecA family.

It is found in the cytoplasm. Can catalyze the hydrolysis of ATP in the presence of single-stranded DNA, the ATP-dependent uptake of single-stranded DNA by duplex DNA, and the ATP-dependent hybridization of homologous single-stranded DNAs. It interacts with LexA causing its activation and leading to its autocatalytic cleavage. The protein is Protein RecA of Bacillus mycoides (strain KBAB4) (Bacillus weihenstephanensis).